A 197-amino-acid polypeptide reads, in one-letter code: TM2 domain-containing protein 1 (197 aa).

The N-terminal stretch at 1-32 is a signal peptide; the sequence is MAFRWRSLMRFRSTTRLLLLFTFCLTVIHSLG. At 33-105 the chain is on the extracellular side; sequence NDVDSCDKLH…GFNKTIPCRN (73 aa). Residues N77, N84, N98, and N105 are each glycosylated (N-linked (GlcNAc...) asparagine). A helical transmembrane segment spans residues 106–126; that stretch reads VSGYSYKVAVALSLFLGWIGA. A TM2 domain is found at 108-155; sequence GYSYKVAVALSLFLGWIGADRFYLGYPALGLLKFCTVGFCGIGSLVDF. Over 127–143 the chain is Cytoplasmic; it reads DRFYLGYPALGLLKFCT. A helical transmembrane segment spans residues 144–164; sequence VGFCGIGSLVDFMLISMQIVG. Topologically, residues 165-197 are extracellular; sequence PSDGSDYIVDYYGARLTRLSITNETYRRMQPSP. The N-linked (GlcNAc...) asparagine glycan is linked to N187.

Belongs to the TM2 family.

It localises to the membrane. This is TM2 domain-containing protein 1 (tm2d1) from Danio rerio (Zebrafish).